A 669-amino-acid polypeptide reads, in one-letter code: Major S-layer protein (669 aa).

The N-terminal stretch at methionine 1 to alanine 24 is a signal peptide. Asparagine 36, asparagine 70, asparagine 116, asparagine 600, and asparagine 607 each carry an N-linked (GlcNAc...) asparagine glycan. The disordered stretch occupies residues aspartate 588–glycine 648. A compositionally biased stretch (acidic residues) spans glutamate 590–threonine 627. The helical transmembrane segment at threonine 645–valine 665 threads the bilayer.

It belongs to the Methanosarcinales S-layer protein family. Post-translationally, glycosylated.

Its subcellular location is the secreted. It is found in the cell wall. The protein localises to the S-layer. The protein resides in the cell membrane. In terms of biological role, S-layer protein. The S-layer is a paracrystalline mono-layered assembly of proteins which coat the surface of the cell. This Methanosarcina mazei (strain ATCC BAA-159 / DSM 3647 / Goe1 / Go1 / JCM 11833 / OCM 88) (Methanosarcina frisia) protein is Major S-layer protein.